The sequence spans 306 residues: Low-density lipoprotein receptor class A domain-containing protein 4 (306 aa).

At 1–64 (MPEAGFQATN…PPGIFNSELE (64 aa)) the chain is on the lumenal side. An LDL-receptor class A domain is found at 16–48 (KFTCTSGKCLYLGSLVCNQQNDCGDNSDEENCL). 2 disulfides stabilise this stretch: C19–C38 and C32–C47. A helical transmembrane segment spans residues 65 to 85 (FAQIIIIVVVVTVMVVVIVCL). The Cytoplasmic portion of the chain corresponds to 86 to 306 (LNHYKVSTRS…GKDRKPGNLV (221 aa)). A PPxY motif 1 motif is present at residues 180 to 183 (PPPY). An SMAD interaction motif (SIM) motif is present at residues 208-211 (PPNR). The PPxY motif 2 motif lies at 252-255 (PPTY). Residues 286–306 (NNAESTIVPIKGKDRKPGNLV) form a disordered region. Residues 296–306 (KGKDRKPGNLV) are compositionally biased toward basic and acidic residues.

Belongs to the PMEPA1 family. Interacts with PMEPA1. Interacts (via the SMAD interaction motif) with SMAD2 and SMAD3. Expressed in lymphocytes.

It is found in the early endosome membrane. In terms of biological role, functions as a negative regulator of TGF-beta signaling and thereby probably plays a role in cell proliferation, differentiation, apoptosis, motility, extracellular matrix production and immunosuppression. In the canonical TGF-beta pathway, ZFYVE9/SARA recruits the intracellular signal transducer and transcriptional modulators SMAD2 and SMAD3 to the TGF-beta receptor. Phosphorylated by the receptor, SMAD2 and SMAD3 then form a heteromeric complex with SMAD4 that translocates to the nucleus to regulate transcription. Through interaction with SMAD2 and SMAD3, LDLRAD4 may compete with ZFYVE9 and SMAD4 and prevent propagation of the intracellular signal. The sequence is that of Low-density lipoprotein receptor class A domain-containing protein 4 (LDLRAD4) from Homo sapiens (Human).